The chain runs to 33 residues: Photosystem II reaction center protein Psb30 (33 aa).

A helical membrane pass occupies residues 5–25 (LITQLASLILIVASGPIVIGL).

It belongs to the Psb30/Ycf12 family. In terms of assembly, PSII is composed of 1 copy each of membrane proteins PsbA, PsbB, PsbC, PsbD, PsbE, PsbF, PsbH, PsbI, PsbJ, PsbK, PsbL, PsbM, PsbT, PsbX, PsbY, PsbZ, Psb30/Ycf12, peripheral proteins of the oxygen-evolving complex and a large number of cofactors. It forms dimeric complexes.

It localises to the plastid. It is found in the chloroplast thylakoid membrane. A core subunit of photosystem II (PSII), probably helps stabilize the reaction center. This Lepocinclis buetschlii protein is Photosystem II reaction center protein Psb30.